A 524-amino-acid chain; its full sequence is MLKIDMWFKLKSLGFSLISLQALLASCSAVSPVPVPIEEKNDSTTDNNATPFKDEQSDQGTEVNQQPKVEQKVYNRNFKFNTSFIPEESDIYRKGYDLTFTLNFTSFSNDSYGTGWLIDWKGDENTTQKQGSFFAYIATNLHVADGLRNIGDHWPYSKTDDQREFNEYESTVYFSIGKYTNKTDITKLYQEEKLEQRKVNDSLLSIQTSNIPKTAYTATNFLKGVNSIKPVYADFAVIELELNLENLRDWQIFNEFIKPAINTYKSLGDSTNIFETKDLEQHWNHSHYLLGYPVLERGYDQNRLLEQKEEFARTHNFNQKSQLWSKNTYLVSTAKEIPVITKNARKDGQIGSEIFSKKTQDSHVDKVIKHEKGIVTFQNFKNFKLKYHDKEYQQYGYGLMLDDTNLPGGSSGSAIFNNNQKINSIYFGVLEVYKNSKTHKDNIGMSQLLRTSKRESEKNKTRTTNNRDKFQHYDLIFGDSNTKSFYAQFAKKHNTHLYDQIKSSEKEEFKYVDKNNQKTPFLLR.

A signal peptide spans 1 to 26 (MLKIDMWFKLKSLGFSLISLQALLAS). The N-palmitoyl cysteine moiety is linked to residue Cys27. Cys27 carries the S-diacylglycerol cysteine lipid modification. Residues 37–68 (IEEKNDSTTDNNATPFKDEQSDQGTEVNQQPK) are disordered. Residues 58-68 (DQGTEVNQQPK) show a composition bias toward polar residues.

It belongs to the MG067/MG068/MG395 family.

It localises to the cell membrane. This is an uncharacterized protein from Mycoplasma genitalium (strain ATCC 33530 / DSM 19775 / NCTC 10195 / G37) (Mycoplasmoides genitalium).